Consider the following 975-residue polypeptide: Glycine dehydrogenase (decarboxylating) (975 aa).

K723 is subject to N6-(pyridoxal phosphate)lysine.

The protein belongs to the GcvP family. In terms of assembly, the glycine cleavage system is composed of four proteins: P, T, L and H. Requires pyridoxal 5'-phosphate as cofactor.

It carries out the reaction N(6)-[(R)-lipoyl]-L-lysyl-[glycine-cleavage complex H protein] + glycine + H(+) = N(6)-[(R)-S(8)-aminomethyldihydrolipoyl]-L-lysyl-[glycine-cleavage complex H protein] + CO2. In terms of biological role, the glycine cleavage system catalyzes the degradation of glycine. The P protein binds the alpha-amino group of glycine through its pyridoxal phosphate cofactor; CO(2) is released and the remaining methylamine moiety is then transferred to the lipoamide cofactor of the H protein. This is Glycine dehydrogenase (decarboxylating) from Burkholderia orbicola (strain MC0-3).